Reading from the N-terminus, the 368-residue chain is Chaperone protein DnaJ (368 aa).

A J domain is found at 5 to 70; that stretch reads DYYEVLGVSK…EKRSMYDRMG (66 aa). A CR-type zinc finger spans residues 132–210; the sequence is GVKKTITFTA…CHGSGVADRQ (79 aa). 8 residues coordinate Zn(2+): Cys-145, Cys-148, Cys-162, Cys-165, Cys-184, Cys-187, Cys-198, and Cys-201. CXXCXGXG motif repeat units lie at residues 145–152, 162–169, 184–191, and 198–205; these read CEVCDGKG, CRTCHGTG, CGTCRGQG, and CQSCHGSG. The segment at 349–368 is disordered; the sequence is DGDEHSSSPKKKSFFDRLFD. Over residues 350-368 the composition is skewed to basic and acidic residues; that stretch reads GDEHSSSPKKKSFFDRLFD.

This sequence belongs to the DnaJ family. As to quaternary structure, homodimer. The cofactor is Zn(2+).

The protein localises to the cytoplasm. Functionally, participates actively in the response to hyperosmotic and heat shock by preventing the aggregation of stress-denatured proteins and by disaggregating proteins, also in an autonomous, DnaK-independent fashion. Unfolded proteins bind initially to DnaJ; upon interaction with the DnaJ-bound protein, DnaK hydrolyzes its bound ATP, resulting in the formation of a stable complex. GrpE releases ADP from DnaK; ATP binding to DnaK triggers the release of the substrate protein, thus completing the reaction cycle. Several rounds of ATP-dependent interactions between DnaJ, DnaK and GrpE are required for fully efficient folding. Also involved, together with DnaK and GrpE, in the DNA replication of plasmids through activation of initiation proteins. This is Chaperone protein DnaJ from Acinetobacter baylyi (strain ATCC 33305 / BD413 / ADP1).